A 206-amino-acid polypeptide reads, in one-letter code: 2,3-bisphosphoglycerate-dependent phosphoglycerate mutase (206 aa).

Residues 9–16 (RHGQSEWN), 22–23 (TG), R61, 88–91 (ERDY), K99, 115–116 (RR), and 159–160 (GN) each bind substrate. Catalysis depends on H10, which acts as the Tele-phosphohistidine intermediate. Residue E88 is the Proton donor/acceptor of the active site.

Belongs to the phosphoglycerate mutase family. BPG-dependent PGAM subfamily. As to quaternary structure, homodimer.

It carries out the reaction (2R)-2-phosphoglycerate = (2R)-3-phosphoglycerate. It functions in the pathway carbohydrate degradation; glycolysis; pyruvate from D-glyceraldehyde 3-phosphate: step 3/5. Its function is as follows. Catalyzes the interconversion of 2-phosphoglycerate and 3-phosphoglycerate. The polypeptide is 2,3-bisphosphoglycerate-dependent phosphoglycerate mutase (Mesorhizobium japonicum (strain LMG 29417 / CECT 9101 / MAFF 303099) (Mesorhizobium loti (strain MAFF 303099))).